Consider the following 180-residue polypeptide: Major urinary protein 2 (180 aa).

The signal sequence occupies residues 1–18; it reads MKMLLLLCLGLTLVCVHA. A disulfide bridge links Cys82 with Cys175.

It belongs to the calycin superfamily. Lipocalin family. In terms of tissue distribution, abundant in the urine of adult male mice but absent from that of females.

It is found in the secreted. Its function is as follows. Binds pheromones that are released from drying urine of males. These pheromones affect the sexual behavior of females. The chain is Major urinary protein 2 (Mup2) from Mus musculus (Mouse).